Reading from the N-terminus, the 139-residue chain is Protocatechuate 4,5-dioxygenase alpha chain (139 aa).

As to quaternary structure, composed of two subunits (alpha and beta) in a 1:1 ratio. It depends on Fe(2+) as a cofactor.

The enzyme catalyses 3,4-dihydroxybenzoate + O2 = 4-carboxy-2-hydroxy-cis,cis-muconate 6-semialdehyde + H(+). In terms of biological role, responsible for the aromatic ring fission of protocatechuate. The protein is Protocatechuate 4,5-dioxygenase alpha chain (ligA) of Sphingobium sp. (strain NBRC 103272 / SYK-6).